The chain runs to 1441 residues: Gag-Pol polyprotein (1441 aa).

Gly-2 carries the N-myristoyl glycine; by host lipid modification. A Nuclear export signal motif is present at residues 16–22 (FEKIRLK). A Nuclear localization signal motif is present at residues 26–32 (KKCYRLK). The disordered stretch occupies residues 204–226 (THPQQQPAQPGGGLRTPSGSDIA). 2 CCHC-type zinc fingers span residues 386–403 (PICF…FFKA) and 407–424 (KGCW…QCPK). Over residues 444 to 466 (TGELSGTRGDSNSSTIRGETSAE) the composition is skewed to polar residues. Residues 444-494 (TGELSGTRGDSNSSTIRGETSAENSEHLSEIRERAQAEDEGGEERGGFSFP) form a disordered region. The segment covering 467-480 (NSEHLSEIRERAQA) has biased composition (basic and acidic residues). The 72-residue stretch at 513–584 (IRALLDTGAD…TPIDIIGRNI (72 aa)) folds into the Peptidase A2 domain. The active-site For protease activity; shared with dimeric partner is Asp-518. The Reverse transcriptase domain occupies 640–830 (EGKISRVDPG…PPFHWMGYEL (191 aa)). Positions 706, 781, and 782 each coordinate Mg(2+). The RT 'primer grip' stretch occupies residues 823–831 (FHWMGYELH). Positions 994 to 1010 (WEDWWHEYWQCTWIPEV) match the Tryptophan repeat motif motif. The RNase H type-1 domain occupies 1030–1153 (LEGVETYYVD…IDKLVSSGIR (124 aa)). Residues Asp-1039, Glu-1074, Asp-1094, and Asp-1145 each contribute to the Mg(2+) site. An Integrase-type zinc finger spans residues 1159–1200 (QNIEPAQEEHEKYHSNEAQLREKFHLPALVAKQIVQSCSKCC). The Zn(2+) site is built by His-1168, His-1172, Cys-1196, and Cys-1199. Residues 1210-1360 (TDASLGVWQI…TAGERIVNMI (151 aa)) form the Integrase catalytic domain. Mg(2+) contacts are provided by Asp-1220 and Asp-1272. A DNA-binding region (integrase-type) is located at residues 1379 to 1426 (FKVYFREGRDQLWKGPGILLWKGEGAVVLKYQEEIKIVPRRKCKIIKD).

In terms of assembly, homotrimer. Interacts with gp41 (via C-terminus). As to quaternary structure, homodimer. The active site consists of two apposed aspartic acid residues. Heterodimer of p66 RT and p51 RT (RT p66/p51). Heterodimerization of RT is essential for DNA polymerase activity. Despite the sequence identities, p66 RT and p51 RT have distinct folding. In terms of assembly, homotetramer; may further associate as a homohexadecamer. Requires Mg(2+) as cofactor. Post-translationally, specific enzymatic cleavages by the viral protease yield mature proteins. The protease is released by autocatalytic cleavage. The polyprotein is cleaved during and after budding, this process is termed maturation. Proteolytic cleavage of p66 RT removes the RNase H domain to yield the p51 RT subunit. In terms of processing, capsid protein p24 is phosphorylated.

Its subcellular location is the virion. The protein resides in the host nucleus. The protein localises to the host cytoplasm. It localises to the host cell membrane. The enzyme catalyses Specific for a P1 residue that is hydrophobic, and P1' variable, but often Pro.. It catalyses the reaction Endohydrolysis of RNA in RNA/DNA hybrids. Three different cleavage modes: 1. sequence-specific internal cleavage of RNA. Human immunodeficiency virus type 1 and Moloney murine leukemia virus enzymes prefer to cleave the RNA strand one nucleotide away from the RNA-DNA junction. 2. RNA 5'-end directed cleavage 13-19 nucleotides from the RNA end. 3. DNA 3'-end directed cleavage 15-20 nucleotides away from the primer terminus.. The catalysed reaction is 3'-end directed exonucleolytic cleavage of viral RNA-DNA hybrid.. It carries out the reaction DNA(n) + a 2'-deoxyribonucleoside 5'-triphosphate = DNA(n+1) + diphosphate. The viral protease is inhibited by many synthetic protease inhibitors (PIs), such as amprenavir, atazanavir, indinavir, loprinavir, nelfinavir, ritonavir and saquinavir. RT can be inhibited either by nucleoside RT inhibitors (NRTIs) or by non nucleoside RT inhibitors (NNRTIs). NRTIs act as chain terminators, whereas NNRTIs inhibit DNA polymerization by binding a small hydrophobic pocket near the RT active site and inducing an allosteric change in this region. Classical NRTIs are abacavir, adefovir (PMEA), didanosine (ddI), lamivudine (3TC), stavudine (d4T), tenofovir (PMPA), zalcitabine (ddC), and zidovudine (AZT). Classical NNRTIs are atevirdine (BHAP U-87201E), delavirdine, efavirenz (DMP-266), emivirine (I-EBU), and nevirapine (BI-RG-587). The tritherapies used as a basic effective treatment of AIDS associate two NRTIs and one NNRTI. Use of protease inhibitors in tritherapy regimens permit more ambitious therapeutic strategies. Gag-Pol polyprotein and Gag polyprotein may regulate their own translation, by the binding genomic RNA in the 5'-UTR. At low concentration, Gag-Pol and Gag would promote translation, whereas at high concentration, the polyproteins encapsidate genomic RNA and then shut off translation. Functionally, matrix protein p17 has two main functions: in infected cell, it targets Gag and Gag-pol polyproteins to the plasma membrane via a multipartite membrane-binding signal, that includes its myristointegration complex. The myristoylation signal and the NLS exert conflicting influences its subcellular localization. The key regulation of these motifs might be phosphorylation of a portion of MA molecules on the C-terminal tyrosine at the time of virus maturation, by virion-associated cellular tyrosine kinase. Implicated in the release from host cell mediated by Vpu. Its function is as follows. Capsid protein p24 forms the conical core that encapsulates the genomic RNA-nucleocapsid complex in the virion. The core is constituted by capsid protein hexamer subunits. The core is disassembled soon after virion entry. Interaction with host PPIA/CYPA protects the virus from restriction by host TRIM5-alpha and from an unknown antiviral activity in host cells. This capsid restriction by TRIM5 is one of the factors which restricts SIV to the simian species. In terms of biological role, nucleocapsid protein p7 encapsulates and protects viral dimeric unspliced (genomic) RNA. Binds these RNAs through its zinc fingers. Facilitates rearangement of nucleic acid secondary structure during retrotranscription of genomic RNA. This capability is referred to as nucleic acid chaperone activity. The aspartyl protease mediates proteolytic cleavages of Gag and Gag-Pol polyproteins during or shortly after the release of the virion from the plasma membrane. Cleavages take place as an ordered, step-wise cascade to yield mature proteins. This process is called maturation. Displays maximal activity during the budding process just prior to particle release from the cell. Also cleaves Nef and Vif, probably concomitantly with viral structural proteins on maturation of virus particles. Hydrolyzes host EIF4GI and PABP1 in order to shut off the capped cellular mRNA translation. The resulting inhibition of cellular protein synthesis serves to ensure maximal viral gene expression and to evade host immune response. Functionally, reverse transcriptase/ribonuclease H (RT) is a multifunctional enzyme that converts the viral dimeric RNA genome into dsDNA in the cytoplasm, shortly after virus entry into the cell. This enzyme displays a DNA polymerase activity that can copy either DNA or RNA templates, and a ribonuclease H (RNase H) activity that cleaves the RNA strand of RNA-DNA heteroduplexes in a partially processive 3' to 5' endonucleasic mode. Conversion of viral genomic RNA into dsDNA requires many steps. A tRNA binds to the primer-binding site (PBS) situated at the 5'-end of the viral RNA. RT uses the 3' end of the tRNA primer to perform a short round of RNA-dependent minus-strand DNA synthesis. The reading proceeds through the U5 region and ends after the repeated (R) region which is present at both ends of viral RNA. The portion of the RNA-DNA heteroduplex is digested by the RNase H, resulting in a ssDNA product attached to the tRNA primer. This ssDNA/tRNA hybridizes with the identical R region situated at the 3' end of viral RNA. This template exchange, known as minus-strand DNA strong stop transfer, can be either intra- or intermolecular. RT uses the 3' end of this newly synthesized short ssDNA to perform the RNA-dependent minus-strand DNA synthesis of the whole template. RNase H digests the RNA template except for two polypurine tracts (PPTs) situated at the 5'-end and near the center of the genome. It is not clear if both polymerase and RNase H activities are simultaneous. RNase H can probably proceed both in a polymerase-dependent (RNA cut into small fragments by the same RT performing DNA synthesis) and a polymerase-independent mode (cleavage of remaining RNA fragments by free RTs). Secondly, RT performs DNA-directed plus-strand DNA synthesis using the PPTs that have not been removed by RNase H as primers. PPTs and tRNA primers are then removed by RNase H. The 3' and 5' ssDNA PBS regions hybridize to form a circular dsDNA intermediate. Strand displacement synthesis by RT to the PBS and PPT ends produces a blunt ended, linear dsDNA copy of the viral genome that includes long terminal repeats (LTRs) at both ends. Its function is as follows. Integrase catalyzes viral DNA integration into the host chromosome, by performing a series of DNA cutting and joining reactions. This enzyme activity takes place after virion entry into a cell and reverse transcription of the RNA genome in dsDNA. The first step in the integration process is 3' processing. This step requires a complex comprising the viral genome, matrix protein, Vpr and integrase. This complex is called the pre-integration complex (PIC). The integrase protein removes 2 nucleotides from each 3' end of the viral DNA, leaving recessed CA OH's at the 3' ends. In the second step, the PIC enters cell nucleus. This process is mediated through integrase and Vpr proteins, and allows the virus to infect a non dividing cell. This ability to enter the nucleus is specific of lentiviruses, other retroviruses cannot and rely on cell division to access cell chromosomes. In the third step, termed strand transfer, the integrase protein joins the previously processed 3' ends to the 5' ends of strands of target cellular DNA at the site of integration. The 5'-ends are produced by integrase-catalyzed staggered cuts, 5 bp apart. A Y-shaped, gapped, recombination intermediate results, with the 5'-ends of the viral DNA strands and the 3' ends of target DNA strands remaining unjoined, flanking a gap of 5 bp. The last step is viral DNA integration into host chromosome. This involves host DNA repair synthesis in which the 5 bp gaps between the unjoined strands are filled in and then ligated. Since this process occurs at both cuts flanking the SIV genome, a 5 bp duplication of host DNA is produced at the ends of SIV integration. Alternatively, Integrase may catalyze the excision of viral DNA just after strand transfer, this is termed disintegration. The chain is Gag-Pol polyprotein (gag-pol) from Cercopithecidae (Old World monkeys).